We begin with the raw amino-acid sequence, 85 residues long: Large ribosomal subunit protein bL27 (85 aa).

The segment at 1-21 is disordered; sequence MAHKKAAGSTKNGRDSNAKRL.

It belongs to the bacterial ribosomal protein bL27 family.

The polypeptide is Large ribosomal subunit protein bL27 (Hydrogenovibrio crunogenus (strain DSM 25203 / XCL-2) (Thiomicrospira crunogena)).